The following is a 423-amino-acid chain: tRNA(Ile)-lysidine synthase (423 aa).

18–23 (SGGADS) lines the ATP pocket.

This sequence belongs to the tRNA(Ile)-lysidine synthase family.

It is found in the cytoplasm. It catalyses the reaction cytidine(34) in tRNA(Ile2) + L-lysine + ATP = lysidine(34) in tRNA(Ile2) + AMP + diphosphate + H(+). Ligates lysine onto the cytidine present at position 34 of the AUA codon-specific tRNA(Ile) that contains the anticodon CAU, in an ATP-dependent manner. Cytidine is converted to lysidine, thus changing the amino acid specificity of the tRNA from methionine to isoleucine. This is tRNA(Ile)-lysidine synthase from Aromatoleum aromaticum (strain DSM 19018 / LMG 30748 / EbN1) (Azoarcus sp. (strain EbN1)).